The chain runs to 400 residues: MTQFASPVLHSLLDTDAYKLHMQQAVFHHYYDVQVAAEFRCRGDDLLGIYADAIREQVDAMQHLRLQEDEFQWLSGLPFFKPDYLNWLREFRYNPAQVCVTNDNGKLNIRLTGPWREVIMWEVPLLAVISELVHHYRSPNAGVDQALDALESKLVDFTALTANLDMSRFYLMDFGTRRRFSREVQQAIVKRLQQESWFVGTSNYDLARRLALTPMGTQAHEWFQAHQQISPDLATSQRAALAAWLNEYPDQLGIALTDCITMDAFLRDFGIEFASRYQGLRHDSGDPVAWGEKAIAHYEKLGIDPLTKTLVFSDNLDLPKAVELYRHFASRVQLSFGIGTRLTCDIPQVKPLNIVIKLVECNGKPVAKLSDSPGKTICHDKAFVRALRKAFDLPQVRKAS.

The residue at position 220 (histidine 220) is a Phosphohistidine; by autocatalysis.

It belongs to the NAPRTase family. Transiently phosphorylated on a His residue during the reaction cycle. Phosphorylation strongly increases the affinity for substrates and increases the rate of nicotinate D-ribonucleotide production. Dephosphorylation regenerates the low-affinity form of the enzyme, leading to product release.

It catalyses the reaction nicotinate + 5-phospho-alpha-D-ribose 1-diphosphate + ATP + H2O = nicotinate beta-D-ribonucleotide + ADP + phosphate + diphosphate. The protein operates within cofactor biosynthesis; NAD(+) biosynthesis; nicotinate D-ribonucleotide from nicotinate: step 1/1. In terms of biological role, catalyzes the synthesis of beta-nicotinate D-ribonucleotide from nicotinate and 5-phospho-D-ribose 1-phosphate at the expense of ATP. The protein is Nicotinate phosphoribosyltransferase of Salmonella agona (strain SL483).